We begin with the raw amino-acid sequence, 456 residues long: Bifunctional protein GlmU (456 aa).

Positions 1 to 229 (MLNNAMSVVI…LSEVEGVNNR (229 aa)) are pyrophosphorylase. Residues 11-14 (LAAG), lysine 25, glutamine 76, 81-82 (GT), 103-105 (YGD), glycine 140, glutamate 154, asparagine 169, and asparagine 227 each bind UDP-N-acetyl-alpha-D-glucosamine. Residue aspartate 105 coordinates Mg(2+). Residue asparagine 227 coordinates Mg(2+). The segment at 230 to 250 (LQLSRLERVYQSEQAEKLLLA) is linker. The N-acetyltransferase stretch occupies residues 251–456 (GVMLRDPARF…EGWRRPVKKK (206 aa)). The UDP-N-acetyl-alpha-D-glucosamine site is built by arginine 333 and lysine 351. The active-site Proton acceptor is the histidine 363. UDP-N-acetyl-alpha-D-glucosamine contacts are provided by tyrosine 366 and asparagine 377. Acetyl-CoA contacts are provided by residues alanine 380, 386-387 (NY), serine 405, alanine 423, and arginine 440.

It in the N-terminal section; belongs to the N-acetylglucosamine-1-phosphate uridyltransferase family. In the C-terminal section; belongs to the transferase hexapeptide repeat family. In terms of assembly, homotrimer. Mg(2+) serves as cofactor.

The protein resides in the cytoplasm. It carries out the reaction alpha-D-glucosamine 1-phosphate + acetyl-CoA = N-acetyl-alpha-D-glucosamine 1-phosphate + CoA + H(+). It catalyses the reaction N-acetyl-alpha-D-glucosamine 1-phosphate + UTP + H(+) = UDP-N-acetyl-alpha-D-glucosamine + diphosphate. The protein operates within nucleotide-sugar biosynthesis; UDP-N-acetyl-alpha-D-glucosamine biosynthesis; N-acetyl-alpha-D-glucosamine 1-phosphate from alpha-D-glucosamine 6-phosphate (route II): step 2/2. Its pathway is nucleotide-sugar biosynthesis; UDP-N-acetyl-alpha-D-glucosamine biosynthesis; UDP-N-acetyl-alpha-D-glucosamine from N-acetyl-alpha-D-glucosamine 1-phosphate: step 1/1. It functions in the pathway bacterial outer membrane biogenesis; LPS lipid A biosynthesis. In terms of biological role, catalyzes the last two sequential reactions in the de novo biosynthetic pathway for UDP-N-acetylglucosamine (UDP-GlcNAc). The C-terminal domain catalyzes the transfer of acetyl group from acetyl coenzyme A to glucosamine-1-phosphate (GlcN-1-P) to produce N-acetylglucosamine-1-phosphate (GlcNAc-1-P), which is converted into UDP-GlcNAc by the transfer of uridine 5-monophosphate (from uridine 5-triphosphate), a reaction catalyzed by the N-terminal domain. This is Bifunctional protein GlmU from Escherichia coli O45:K1 (strain S88 / ExPEC).